Reading from the N-terminus, the 329-residue chain is Prostaglandin reductase 1 (329 aa).

Threonine 18 carries the phosphothreonine modification. A Phosphoserine modification is found at serine 20. NADP(+) is bound by residues 152 to 155, lysine 178, tyrosine 193, asparagine 217, 239 to 245, 270 to 272, and asparagine 321; these read GAVG, CGAISTY, and FVV. N6-(2-hydroxyisobutyryl)lysine; alternate is present on lysine 178. The residue at position 178 (lysine 178) is an N6-acetyllysine; alternate.

This sequence belongs to the NADP-dependent oxidoreductase L4BD family. As to quaternary structure, monomer or homodimer. In terms of tissue distribution, high expression in the kidney, liver, and intestine but not in leukocytes.

It localises to the cytoplasm. It carries out the reaction 13,14-dihydro-15-oxo-prostaglandin E1 + NADP(+) = 15-oxoprostaglandin E1 + NADPH + H(+). The enzyme catalyses 13,14-dihydro-15-oxo-prostaglandin E2 + NADP(+) = 15-oxoprostaglandin E2 + NADPH + H(+). It catalyses the reaction 13,14-dihydro-15-oxo-prostaglandin F1alpha + NADP(+) = 15-oxoprostaglandin F1alpha + NADPH + H(+). The catalysed reaction is 13,14-dihydro-15-oxo-PGF2alpha + NADP(+) = 15-oxoprostaglandin F2alpha + NADPH + H(+). It carries out the reaction leukotriene B4 + NADP(+) = 12-oxo-leukotriene B4 + NADPH + H(+). The enzyme catalyses 20-hydroxy-leukotriene B4 + NADP(+) = 12-oxo-20-hydroxy-leukotriene B4 + NADPH + H(+). It catalyses the reaction 6-trans-leukotriene B4 + NADP(+) = 12-oxo-(5S)-hydroxy-(6E,8E,10E,14Z)-eicosatetraenoate + NADPH + H(+). The catalysed reaction is (5S,12S)-dihydroxy-(6E,10E,12E,14Z)-eicosatetraenoate + NADP(+) = 12-oxo-(5S)-hydroxy-(6E,8E,10E,14Z)-eicosatetraenoate + NADPH + H(+). It carries out the reaction an n-alkanal + NADP(+) = an alk-2-enal + NADPH + H(+). The enzyme catalyses hexanal + NADP(+) = (E)-hex-2-enal + NADPH + H(+). It catalyses the reaction octanal + NADP(+) = (2E)-octenal + NADPH + H(+). The catalysed reaction is decanal + NADP(+) = (2E)-decenal + NADPH + H(+). It carries out the reaction dodecanal + NADP(+) = (2E)-dodecenal + NADPH + H(+). The enzyme catalyses 4-hydroxynonanal + NADP(+) = (E)-4-hydroxynon-2-enal + NADPH + H(+). It catalyses the reaction pentan-2-one + NADP(+) = (E)-pent-3-en-2-one + NADPH + H(+). The catalysed reaction is nonan-2-one + NADP(+) = (3E)-nonen-2-one + NADPH + H(+). In terms of biological role, NAD(P)H-dependent oxidoreductase involved in metabolic inactivation of pro- and anti-inflammatory eicosanoids: prostaglandins (PG), leukotrienes (LT) and lipoxins (LX). Catalyzes with high efficiency the reduction of the 13,14 double bond of 15-oxoPGs, including 15-oxo-PGE1, 15-oxo-PGE2, 15-oxo-PGF1-alpha and 15-oxo-PGF2-alpha. Catalyzes with lower efficiency the oxidation of the hydroxyl group at C12 of LTB4 and its derivatives, converting them into biologically less active 12-oxo-LTB4 metabolites. Reduces 15-oxo-LXA4 to 13,14 dihydro-15-oxo-LXA4, enhancing neutrophil recruitment at the inflammatory site. May play a role in metabolic detoxification of alkenals and ketones. Reduces alpha,beta-unsaturated alkenals and ketones, particularly those with medium-chain length, showing highest affinity toward (2E)-decenal and (3E)-3-nonen-2-one. May inactivate 4-hydroxy-2-nonenal, a cytotoxic lipid constituent of oxidized low-density lipoprotein particles. The polypeptide is Prostaglandin reductase 1 (PTGR1) (Homo sapiens (Human)).